The chain runs to 387 residues: 3-ketoacyl-CoA thiolase (387 aa).

The active-site Acyl-thioester intermediate is cysteine 91. Catalysis depends on proton acceptor residues histidine 343 and cysteine 373.

This sequence belongs to the thiolase-like superfamily. Thiolase family. In terms of assembly, heterotetramer of two alpha chains (FadB) and two beta chains (FadA).

It localises to the cytoplasm. It carries out the reaction an acyl-CoA + acetyl-CoA = a 3-oxoacyl-CoA + CoA. It functions in the pathway lipid metabolism; fatty acid beta-oxidation. Its function is as follows. Catalyzes the final step of fatty acid oxidation in which acetyl-CoA is released and the CoA ester of a fatty acid two carbons shorter is formed. This is 3-ketoacyl-CoA thiolase from Yersinia enterocolitica serotype O:8 / biotype 1B (strain NCTC 13174 / 8081).